Reading from the N-terminus, the 613-residue chain is Dihydroxy-acid dehydratase (613 aa).

D81 provides a ligand contact to Mg(2+). C122 contributes to the [2Fe-2S] cluster binding site. The Mg(2+) site is built by D123 and K124. K124 carries the post-translational modification N6-carboxylysine. C193 is a binding site for [2Fe-2S] cluster. Mg(2+) is bound at residue E489. Catalysis depends on S515, which acts as the Proton acceptor.

It belongs to the IlvD/Edd family. Homodimer. It depends on [2Fe-2S] cluster as a cofactor. Mg(2+) is required as a cofactor.

It carries out the reaction (2R)-2,3-dihydroxy-3-methylbutanoate = 3-methyl-2-oxobutanoate + H2O. It catalyses the reaction (2R,3R)-2,3-dihydroxy-3-methylpentanoate = (S)-3-methyl-2-oxopentanoate + H2O. It participates in amino-acid biosynthesis; L-isoleucine biosynthesis; L-isoleucine from 2-oxobutanoate: step 3/4. Its pathway is amino-acid biosynthesis; L-valine biosynthesis; L-valine from pyruvate: step 3/4. Functions in the biosynthesis of branched-chain amino acids. Catalyzes the dehydration of (2R,3R)-2,3-dihydroxy-3-methylpentanoate (2,3-dihydroxy-3-methylvalerate) into 2-oxo-3-methylpentanoate (2-oxo-3-methylvalerate) and of (2R)-2,3-dihydroxy-3-methylbutanoate (2,3-dihydroxyisovalerate) into 2-oxo-3-methylbutanoate (2-oxoisovalerate), the penultimate precursor to L-isoleucine and L-valine, respectively. The chain is Dihydroxy-acid dehydratase from Pseudomonas putida (strain W619).